The chain runs to 178 residues: Large ribosomal subunit protein uL6 (178 aa).

This sequence belongs to the universal ribosomal protein uL6 family. As to quaternary structure, part of the 50S ribosomal subunit.

Functionally, this protein binds to the 23S rRNA, and is important in its secondary structure. It is located near the subunit interface in the base of the L7/L12 stalk, and near the tRNA binding site of the peptidyltransferase center. This is Large ribosomal subunit protein uL6 from Aliarcobacter butzleri (strain RM4018) (Arcobacter butzleri).